Consider the following 72-residue polypeptide: SRY-related protein MG44 (72 aa).

Residues 1–69 (VKRPMNAFMV…KHMADYPNYK (69 aa)) constitute a DNA-binding region (HMG box).

Its subcellular location is the nucleus. The polypeptide is SRY-related protein MG44 (Tarentola mauritanica (Common wall gecko)).